The chain runs to 71 residues: uncharacterized protein (71 aa).

Residues 20–32 (SSGRRQLTATQPR) are compositionally biased toward polar residues. The segment at 20–46 (SSGRRQLTATQPRSDPESQRGRTSSNR) is disordered.

This is an uncharacterized protein from Rhizobium leguminosarum.